The primary structure comprises 365 residues: Outer membrane lipoprotein A (365 aa).

The first 19 residues, 1 to 19 (MNIATKLMASLVASVVLTA), serve as a signal peptide directing secretion. The tract at residues 19-121 (ACSGGGSSGS…KGEELSKDKS (103 aa)) is disordered. C20 carries N-palmitoyl cysteine lipidation. The S-diacylglycerol cysteine moiety is linked to residue C20. Composition is skewed to basic and acidic residues over residues 48-68 (EQPKKEEVPQADNSKAEEPKE) and 105-121 (NPQKDAPKGEELSKDKS).

The protein localises to the cell outer membrane. The sequence is that of Outer membrane lipoprotein A (omlA) from Actinobacillus pleuropneumoniae (Haemophilus pleuropneumoniae).